Reading from the N-terminus, the 601-residue chain is ATP-dependent lipid A-core flippase (601 aa).

Helical transmembrane passes span 26 to 46, 82 to 102, 167 to 187, and 263 to 283; these read VGLF…QPML, LMIV…NYFL, VFLF…MVAI, and VYTP…LFLV. In terms of domain architecture, ABC transmembrane type-1 spans 30 to 321; sequence AVSILGYVIF…LSEVSSTIQR (292 aa). An ABC transporter domain is found at 353–589; sequence IEVRDLSFRY…GGHYARLHAM (237 aa). Residue 387–394 participates in ATP binding; the sequence is GRSGSGKS.

This sequence belongs to the ABC transporter superfamily. Lipid exporter (TC 3.A.1.106) family. As to quaternary structure, homodimer.

The protein localises to the cell inner membrane. The catalysed reaction is ATP + H2O + lipid A-core oligosaccharideSide 1 = ADP + phosphate + lipid A-core oligosaccharideSide 2.. Its function is as follows. Involved in lipopolysaccharide (LPS) biosynthesis. Translocates lipid A-core from the inner to the outer leaflet of the inner membrane. Transmembrane domains (TMD) form a pore in the inner membrane and the ATP-binding domain (NBD) is responsible for energy generation. The protein is ATP-dependent lipid A-core flippase of Aromatoleum aromaticum (strain DSM 19018 / LMG 30748 / EbN1) (Azoarcus sp. (strain EbN1)).